Consider the following 214-residue polypeptide: MRIILLGAPGAGKGTQAQFIMEHYGIPQISTGDMLRAAVKAGTPLGLEAKKVMDAGQLVSDELIIGLVKERIAQDDCANGFLLDGFPRTIPQADAMAANGISIDHVIEIDVPDEEIVNRMSGRRVHPGSGRVYHVVFNPPKVEGKDDVTGEDLVIRPDDEESTVRKRLGIYHEQTKPLVDYYGKVAAEGNTKYTKFDGTQSVAEVSKLIQAALS.

10–15 is an ATP binding site; that stretch reads GAGKGT. Positions 30–59 are NMP; that stretch reads STGDMLRAAVKAGTPLGLEAKKVMDAGQLV. Residues T31, R36, 57 to 59, 85 to 88, and Q92 each bind AMP; these read QLV and GFPR. The interval 122 to 159 is LID; the sequence is GRRVHPGSGRVYHVVFNPPKVEGKDDVTGEDLVIRPDD. ATP-binding positions include R123 and 132 to 133; that span reads VY. 2 residues coordinate AMP: R156 and R167. ATP is bound at residue Q200.

It belongs to the adenylate kinase family. In terms of assembly, monomer.

The protein resides in the cytoplasm. It catalyses the reaction AMP + ATP = 2 ADP. It functions in the pathway purine metabolism; AMP biosynthesis via salvage pathway; AMP from ADP: step 1/1. In terms of biological role, catalyzes the reversible transfer of the terminal phosphate group between ATP and AMP. Plays an important role in cellular energy homeostasis and in adenine nucleotide metabolism. In Shewanella amazonensis (strain ATCC BAA-1098 / SB2B), this protein is Adenylate kinase.